We begin with the raw amino-acid sequence, 222 residues long: Peptide methionine sulfoxide reductase MsrA (222 aa).

C55 is an active-site residue.

This sequence belongs to the MsrA Met sulfoxide reductase family.

It catalyses the reaction L-methionyl-[protein] + [thioredoxin]-disulfide + H2O = L-methionyl-(S)-S-oxide-[protein] + [thioredoxin]-dithiol. It carries out the reaction [thioredoxin]-disulfide + L-methionine + H2O = L-methionine (S)-S-oxide + [thioredoxin]-dithiol. In terms of biological role, has an important function as a repair enzyme for proteins that have been inactivated by oxidation. Catalyzes the reversible oxidation-reduction of methionine sulfoxide in proteins to methionine. The sequence is that of Peptide methionine sulfoxide reductase MsrA from Streptomyces griseus subsp. griseus (strain JCM 4626 / CBS 651.72 / NBRC 13350 / KCC S-0626 / ISP 5235).